The sequence spans 208 residues: Uracil phosphoribosyltransferase (208 aa).

Residues R78, R103, and 130-138 (DPMLATGGS) contribute to the 5-phospho-alpha-D-ribose 1-diphosphate site. Uracil contacts are provided by residues I193 and 198–200 (GDA). D199 is a binding site for 5-phospho-alpha-D-ribose 1-diphosphate.

The protein belongs to the UPRTase family. Mg(2+) is required as a cofactor.

It carries out the reaction UMP + diphosphate = 5-phospho-alpha-D-ribose 1-diphosphate + uracil. The protein operates within pyrimidine metabolism; UMP biosynthesis via salvage pathway; UMP from uracil: step 1/1. With respect to regulation, allosterically activated by GTP. Functionally, catalyzes the conversion of uracil and 5-phospho-alpha-D-ribose 1-diphosphate (PRPP) to UMP and diphosphate. This Shewanella halifaxensis (strain HAW-EB4) protein is Uracil phosphoribosyltransferase.